We begin with the raw amino-acid sequence, 597 residues long: Leukocyte immunoglobulin-like receptor subfamily B member 2 (597 aa).

The N-terminal stretch at 1-21 (MTPIVTVLICLGLSLGPRTRV) is a signal peptide. At 22–460 (QTGTIPKPTL…QSGLGRHLGV (439 aa)) the chain is on the extracellular side. 4 Ig-like C2-type domains span residues 27–110 (PKPT…SELS), 111–229 (DPLV…SLSV), 230–318 (QPGP…ILIT), and 330–419 (QPGP…LVVS). 4 cysteine pairs are disulfide-bonded: C49-C98, C144-C196, C156-C166, and C245-C296. Residues N280, N301, and N340 are each glycosylated (N-linked (GlcNAc...) asparagine). C345 and C396 are oxidised to a cystine. The interval 417-451 (VVSGPSMGSSPPPTGPISTPGPEDQPLTPTGSDPQ) is disordered. The helical transmembrane segment at 461-481 (VIGILVAVVLLLLLLLLLFLI) threads the bilayer. The Cytoplasmic segment spans residues 482–597 (LRHRRQGKHW…PSIYATLAIH (116 aa)). The interval 491–523 (WTSTQRKADFQHPAGAVGPEPTDRGLQWRSSPA) is disordered. Short sequence motifs (ITIM motif) lie at residues 530–535 (NLYAAV), 559–564 (VTYAQL), and 589–594 (SIYATL). Residues 537–597 (DTQPEDGVEM…PSIYATLAIH (61 aa)) form a disordered region.

As to quaternary structure, binds PTPN6 when phosphorylated. Binds FCGR1A. Interacts with peptide-bound HLA-G-B2M; this interaction is direct. Interacts with peptide-bound HLA-F-B2M; this interaction is direct. Post-translationally, phosphorylated on tyrosine residues. Dephosphorylated by PTPN6. As to expression, expressed in monocytes and at lower levels in myeloid and plasmacytoid dendritic cells. Expressed in tolerogenic IL10-producing dendritic cells. Expressed in myeloid-derived suppressor cells during pregnancy. Detected at low levels in natural killer (NK) cells. Expressed in B cells.

It localises to the cell membrane. Its function is as follows. Receptor for class I MHC antigens. Recognizes a broad spectrum of HLA-A, HLA-B, HLA-C, HLA-G and HLA-F alleles. Involved in the down-regulation of the immune response and the development of tolerance. Recognizes HLA-G in complex with B2M/beta-2 microglobulin and a nonamer self-peptide (peptide-bound HLA-G-B2M) triggering differentiation of type 1 regulatory T cells and myeloid-derived suppressor cells, both of which actively maintain maternal-fetal tolerance. Competes with CD8A for binding to class I MHC antigens. Inhibits FCGR1A-mediated phosphorylation of cellular proteins and mobilization of intracellular calcium ions. The chain is Leukocyte immunoglobulin-like receptor subfamily B member 2 from Homo sapiens (Human).